The chain runs to 533 residues: 2-isopropylmalate synthase (533 aa).

Positions 8 to 269 constitute a Pyruvate carboxyltransferase domain; the sequence is IIIFDTTLRD…YYNPFLGRPA (262 aa). Residues Asp17, His208, His210, and Asn244 each coordinate Mn(2+). Positions 408-533 are regulatory domain; it reads RLELVQVSCG…VSANPAKASL (126 aa).

The protein belongs to the alpha-IPM synthase/homocitrate synthase family. LeuA type 1 subfamily. As to quaternary structure, homodimer. Mn(2+) is required as a cofactor.

The protein resides in the cytoplasm. It carries out the reaction 3-methyl-2-oxobutanoate + acetyl-CoA + H2O = (2S)-2-isopropylmalate + CoA + H(+). It participates in amino-acid biosynthesis; L-leucine biosynthesis; L-leucine from 3-methyl-2-oxobutanoate: step 1/4. In terms of biological role, catalyzes the condensation of the acetyl group of acetyl-CoA with 3-methyl-2-oxobutanoate (2-ketoisovalerate) to form 3-carboxy-3-hydroxy-4-methylpentanoate (2-isopropylmalate). This is 2-isopropylmalate synthase from Picosynechococcus sp. (strain ATCC 27264 / PCC 7002 / PR-6) (Agmenellum quadruplicatum).